The following is a 222-amino-acid chain: UPF0758 protein YicR (222 aa).

Residues 100-222 enclose the MPN domain; the sequence is PLLSPEMTRE…YVSFAERGWI (123 aa). His171, His173, and Asp184 together coordinate Zn(2+). Positions 171–184 match the JAMM motif motif; that stretch reads HNHPSGCAEPSKAD.

This sequence belongs to the UPF0758 family. YicR subfamily.

The protein is UPF0758 protein YicR of Escherichia coli O9:H4 (strain HS).